A 578-amino-acid chain; its full sequence is Probable multidrug ABC transporter ATP-binding protein YbhF (578 aa).

2 consecutive ABC transporter domains span residues 6 to 237 and 330 to 559; these read ITLN…LMTS and IEAK…PDPT. Residues 40–47 and 362–369 contribute to the ATP site; these read GPDGAGKT and GPNGAGKS.

The protein belongs to the ABC transporter superfamily. In terms of assembly, the complex is probably composed of two ATP-binding proteins (YbhF) and two transmembrane proteins (YbhR and YbhS).

Functionally, part of the ABC transporter complex YbhFSR that could be involved in efflux of cefoperazone. Probably responsible for energy coupling to the transport system. This Escherichia coli (strain K12) protein is Probable multidrug ABC transporter ATP-binding protein YbhF (ybhF).